A 367-amino-acid chain; its full sequence is UDP-N-acetylenolpyruvoylglucosamine reductase 2 (367 aa).

Residues 31 to 198 form the FAD-binding PCMH-type domain; it reads IGGKPRSAVR…LAIELQLLTD (168 aa). Arg176 is a catalytic residue. Residue Ser256 is the Proton donor of the active site. Residue Glu357 is part of the active site.

The protein belongs to the MurB family. Requires FAD as cofactor.

It localises to the cytoplasm. The enzyme catalyses UDP-N-acetyl-alpha-D-muramate + NADP(+) = UDP-N-acetyl-3-O-(1-carboxyvinyl)-alpha-D-glucosamine + NADPH + H(+). It functions in the pathway cell wall biogenesis; peptidoglycan biosynthesis. In terms of biological role, cell wall formation. The sequence is that of UDP-N-acetylenolpyruvoylglucosamine reductase 2 (murB2) from Corynebacterium glutamicum (strain ATCC 13032 / DSM 20300 / JCM 1318 / BCRC 11384 / CCUG 27702 / LMG 3730 / NBRC 12168 / NCIMB 10025 / NRRL B-2784 / 534).